Here is a 723-residue protein sequence, read N- to C-terminus: Fatty acid oxidation complex subunit alpha (723 aa).

An enoyl-CoA hydratase/isomerase region spans residues methionine 1 to glutamate 189. Position 296 (aspartate 296) interacts with substrate. Residues serine 311 to isoleucine 723 are 3-hydroxyacyl-CoA dehydrogenase. NAD(+)-binding positions include methionine 325, aspartate 344, valine 401–glutamate 403, lysine 408, and serine 430. Histidine 451 acts as the For 3-hydroxyacyl-CoA dehydrogenase activity in catalysis. Asparagine 454 contributes to the NAD(+) binding site. Residues asparagine 501 and tyrosine 661 each coordinate substrate.

This sequence in the N-terminal section; belongs to the enoyl-CoA hydratase/isomerase family. The protein in the C-terminal section; belongs to the 3-hydroxyacyl-CoA dehydrogenase family. As to quaternary structure, heterotetramer of two alpha chains (FadB) and two beta chains (FadA).

It carries out the reaction a (3S)-3-hydroxyacyl-CoA + NAD(+) = a 3-oxoacyl-CoA + NADH + H(+). It catalyses the reaction a (3S)-3-hydroxyacyl-CoA = a (2E)-enoyl-CoA + H2O. The enzyme catalyses a 4-saturated-(3S)-3-hydroxyacyl-CoA = a (3E)-enoyl-CoA + H2O. The catalysed reaction is (3S)-3-hydroxybutanoyl-CoA = (3R)-3-hydroxybutanoyl-CoA. It carries out the reaction a (3Z)-enoyl-CoA = a 4-saturated (2E)-enoyl-CoA. It catalyses the reaction a (3E)-enoyl-CoA = a 4-saturated (2E)-enoyl-CoA. It functions in the pathway lipid metabolism; fatty acid beta-oxidation. Its function is as follows. Involved in the aerobic and anaerobic degradation of long-chain fatty acids via beta-oxidation cycle. Catalyzes the formation of 3-oxoacyl-CoA from enoyl-CoA via L-3-hydroxyacyl-CoA. It can also use D-3-hydroxyacyl-CoA and cis-3-enoyl-CoA as substrate. This is Fatty acid oxidation complex subunit alpha from Vibrio parahaemolyticus serotype O3:K6 (strain RIMD 2210633).